Consider the following 23-residue polypeptide: Dahlein-4.1 (23 aa).

Expressed by the skin dorsal glands.

It localises to the secreted. Functionally, has no antimicrobial activity. The chain is Dahlein-4.1 from Ranoidea dahlii (Dahl's aquatic frog).